We begin with the raw amino-acid sequence, 555 residues long: GPI-anchor transamidase component PIGS (555 aa).

The Cytoplasmic portion of the chain corresponds to Ala2 to Arg18. 2 residues coordinate a cardiolipin: Arg15 and Arg18. Residues Ser19 to Thr39 traverse the membrane as a helical segment. Residues Glu40 to Gln517 are Lumenal-facing. 2 N-linked (GlcNAc...) asparagine glycosylation sites follow: Asn267 and Asn370. Residues Lys518–Pro532 traverse the membrane as a helical segment. Topologically, residues Ile533–Asp555 are cytoplasmic.

Belongs to the PIGS family. In terms of assembly, heteropentamer. Part of the GPI-anchor transamidase complex, consisting of PIGK, PIGT, PIGS, PIGU and GAA1.

The protein localises to the endoplasmic reticulum membrane. The protein operates within glycolipid biosynthesis; glycosylphosphatidylinositol-anchor biosynthesis. In terms of biological role, component of the glycosylphosphatidylinositol-anchor (GPI-anchor) transamidase (GPI-T) complex that catalyzes the formation of the linkage between a proprotein and a GPI-anchor and participates in GPI anchored protein biosynthesis. This is GPI-anchor transamidase component PIGS from Mus musculus (Mouse).